Here is a 167-residue protein sequence, read N- to C-terminus: Centrin-3 (167 aa).

4 consecutive EF-hand domains span residues 25–60 (EQKQEIKDAFELFDTDKDEAIDYHELKVAMRALGFD), 61–96 (VKKADVLKILKDYDREATGKITFEDFNEVVTDWILE), 98–133 (DPHEEILKAFKLFDDDDSGKISLRNLRRVARELGEN), and 134–167 (MSDEELRAMIEEFDKDGDGEINQEEFIAIMTGDI). At Ser135 the chain carries Phosphoserine. Residues Asp147, Asp149, Asp151, Glu153, and Glu158 each coordinate Ca(2+).

This sequence belongs to the centrin family. Monomer. Component of the nuclear pore complex (NPC)-associated TREX-2 complex (transcription and export complex 2), composed of at least GANP, 2 copies of ENY2, PCID2, SEM1/DSS1, and either centrin CETN2 or centrin CETN3. The TREX-2 complex also associates with ALYREF/ALY and with the nucleoporin NUP153. Interacts with USP49.

The protein resides in the cytoplasm. The protein localises to the cytoskeleton. It is found in the microtubule organizing center. It localises to the centrosome. Its subcellular location is the nucleus. The protein resides in the nucleolus. The protein localises to the nucleus envelope. It is found in the nuclear pore complex. It localises to the centriole. Functionally, plays a fundamental role in microtubule-organizing center structure and function. In terms of biological role, as a component of the TREX-2 complex, involved in the export of mRNAs to the cytoplasm through the nuclear pores. In Homo sapiens (Human), this protein is Centrin-3 (CETN3).